The sequence spans 137 residues: 2-iminobutanoate/2-iminopropanoate deaminase (137 aa).

Ser2 is modified (N-acetylserine). N6-succinyllysine occurs at positions 13, 60, and 67. Thr74 carries the phosphothreonine modification.

The protein belongs to the RutC family. Homotrimer. Interacts with YTHDF2. In terms of tissue distribution, liver and kidney.

Its subcellular location is the cytoplasm. It is found in the nucleus. It localises to the peroxisome. The protein localises to the mitochondrion. The catalysed reaction is 2-iminobutanoate + H2O = 2-oxobutanoate + NH4(+). It catalyses the reaction 2-iminopropanoate + H2O = pyruvate + NH4(+). Its function is as follows. Catalyzes the hydrolytic deamination of enamine/imine intermediates that form during the course of normal metabolism. May facilitate the release of ammonia from these potentially toxic reactive metabolites, reducing their impact on cellular components. It may act on enamine/imine intermediates formed by several types of pyridoxal-5'-phosphate-dependent dehydratases including L-threonine dehydratase. In terms of biological role, also promotes endoribonucleolytic cleavage of some transcripts by promoting recruitment of the ribonuclease P/MRP complex. Acts by bridging YTHDF2 and the ribonuclease P/MRP complex. RIDA/HRSP12 binds to N6-methyladenosine (m6A)-containing mRNAs containing a 5'-GGUUC-3' motif: cooperative binding of RIDA/HRSP12 and YTHDF2 to such transcripts lead to recruitment of the ribonuclease P/MRP complex and subsequent endoribonucleolytic cleavage. The sequence is that of 2-iminobutanoate/2-iminopropanoate deaminase from Rattus norvegicus (Rat).